Consider the following 357-residue polypeptide: UPF0283 membrane protein BMEI0952 (357 aa).

The segment at 1-36 is disordered; it reads MSDKTPRKPTAFRLEQPARVSAASEQEEPRRPRAVK. Over residues 27–36 the composition is skewed to basic and acidic residues; that stretch reads EEPRRPRAVK. 2 consecutive transmembrane segments (helical) span residues 78-98 and 109-129; these read ILFG…TEDL and LGWT…AIIL.

Belongs to the UPF0283 family.

It localises to the cell inner membrane. The sequence is that of UPF0283 membrane protein BMEI0952 from Brucella melitensis biotype 1 (strain ATCC 23456 / CCUG 17765 / NCTC 10094 / 16M).